Here is a 292-residue protein sequence, read N- to C-terminus: D-alanyl-D-alanine endopeptidase (292 aa).

The signal sequence occupies residues 1 to 18; it reads MFKKALFILSLCPSFALA. Ser45 functions as the Acyl-ester intermediate in the catalytic mechanism. The Proton acceptor role is filled by Lys48. The active site involves Ser102. Residue Lys207 participates in substrate binding.

The protein belongs to the peptidase S11 family.

It localises to the periplasm. Functionally, cell wall formation. May play a specialized role in remodeling the cell wall. Specifically hydrolyzes the DD-diaminopimelate-alanine bonds in high-molecular-mass murein sacculi. The protein is D-alanyl-D-alanine endopeptidase (pbpG) of Haemophilus influenzae (strain ATCC 51907 / DSM 11121 / KW20 / Rd).